We begin with the raw amino-acid sequence, 364 residues long: Dual-specificity RNA methyltransferase RlmN (364 aa).

Glutamate 93 (proton acceptor) is an active-site residue. The 239-residue stretch at 99-337 (EDDRGTLCIS…ATIRKTRGDD (239 aa)) folds into the Radical SAM core domain. A disulfide bond links cysteine 106 and cysteine 342. Positions 113, 117, and 120 each coordinate [4Fe-4S] cluster. S-adenosyl-L-methionine is bound by residues 167–168 (GE), serine 199, 221–223 (SLH), and asparagine 299. Cysteine 342 serves as the catalytic S-methylcysteine intermediate.

Belongs to the radical SAM superfamily. RlmN family. Requires [4Fe-4S] cluster as cofactor.

It localises to the cytoplasm. The catalysed reaction is adenosine(2503) in 23S rRNA + 2 reduced [2Fe-2S]-[ferredoxin] + 2 S-adenosyl-L-methionine = 2-methyladenosine(2503) in 23S rRNA + 5'-deoxyadenosine + L-methionine + 2 oxidized [2Fe-2S]-[ferredoxin] + S-adenosyl-L-homocysteine. It carries out the reaction adenosine(37) in tRNA + 2 reduced [2Fe-2S]-[ferredoxin] + 2 S-adenosyl-L-methionine = 2-methyladenosine(37) in tRNA + 5'-deoxyadenosine + L-methionine + 2 oxidized [2Fe-2S]-[ferredoxin] + S-adenosyl-L-homocysteine. Its function is as follows. Specifically methylates position 2 of adenine 2503 in 23S rRNA and position 2 of adenine 37 in tRNAs. m2A2503 modification seems to play a crucial role in the proofreading step occurring at the peptidyl transferase center and thus would serve to optimize ribosomal fidelity. The sequence is that of Dual-specificity RNA methyltransferase RlmN from Dichelobacter nodosus (strain VCS1703A).